Here is a 572-residue protein sequence, read N- to C-terminus: Enolase 4 (572 aa).

The disordered stretch occupies residues 181–204; that stretch reads IEPVPSPVTSPALGKKKGSGKGKK. A compositionally biased stretch (basic residues) spans 194–204; that stretch reads GKKKGSGKGKK. E288 serves as a coordination point for substrate. K468 (proton acceptor) is an active-site residue. K519 is a binding site for substrate.

It belongs to the enolase family.

It catalyses the reaction (2R)-2-phosphoglycerate = phosphoenolpyruvate + H2O. The protein operates within carbohydrate degradation; glycolysis; pyruvate from D-glyceraldehyde 3-phosphate: step 4/5. In Xenopus laevis (African clawed frog), this protein is Enolase 4 (eno4).